The sequence spans 247 residues: D-alanyl-D-alanine dipeptidase (247 aa).

Zn(2+) contacts are provided by H140 and D147. E215 (proton donor/acceptor) is an active-site residue. H218 contributes to the Zn(2+) binding site.

This sequence belongs to the peptidase M15D family. Requires Zn(2+) as cofactor.

It is found in the cytoplasm. The enzyme catalyses D-alanyl-D-alanine + H2O = 2 D-alanine. Its function is as follows. Catalyzes hydrolysis of the D-alanyl-D-alanine dipeptide. May have a role in cell-wall turnover. This is D-alanyl-D-alanine dipeptidase from Synechocystis sp. (strain ATCC 27184 / PCC 6803 / Kazusa).